Here is a 102-residue protein sequence, read N- to C-terminus: uncharacterized protein (102 aa).

2 helical membrane passes run 21–43 (FSSSALVGIAPLTAYSALVTPVF) and 58–80 (SFAVNTPFKSCWCVIVMCSYFFC).

The protein resides in the membrane. This is an uncharacterized protein from Saccharomyces cerevisiae (strain ATCC 204508 / S288c) (Baker's yeast).